The sequence spans 430 residues: Enolase (430 aa).

Residue Q168 participates in (2R)-2-phosphoglycerate binding. E210 functions as the Proton donor in the catalytic mechanism. The Mg(2+) site is built by D247, E288, and D315. (2R)-2-phosphoglycerate contacts are provided by K340, R369, S370, and K391. K340 functions as the Proton acceptor in the catalytic mechanism.

Belongs to the enolase family. Mg(2+) serves as cofactor.

The protein localises to the cytoplasm. Its subcellular location is the secreted. It localises to the cell surface. The enzyme catalyses (2R)-2-phosphoglycerate = phosphoenolpyruvate + H2O. Its pathway is carbohydrate degradation; glycolysis; pyruvate from D-glyceraldehyde 3-phosphate: step 4/5. In terms of biological role, catalyzes the reversible conversion of 2-phosphoglycerate (2-PG) into phosphoenolpyruvate (PEP). It is essential for the degradation of carbohydrates via glycolysis. In Rippkaea orientalis (strain PCC 8801 / RF-1) (Cyanothece sp. (strain PCC 8801)), this protein is Enolase.